We begin with the raw amino-acid sequence, 328 residues long: Biotin synthase (328 aa).

The region spanning Phe-48–Arg-277 is the Radical SAM core domain. [4Fe-4S] cluster contacts are provided by Cys-66, Cys-70, and Cys-73. The [2Fe-2S] cluster site is built by Ser-142 and Cys-202.

The protein belongs to the radical SAM superfamily. Biotin synthase family. In terms of assembly, homodimer. [4Fe-4S] cluster serves as cofactor. Requires [2Fe-2S] cluster as cofactor.

It carries out the reaction (4R,5S)-dethiobiotin + (sulfur carrier)-SH + 2 reduced [2Fe-2S]-[ferredoxin] + 2 S-adenosyl-L-methionine = (sulfur carrier)-H + biotin + 2 5'-deoxyadenosine + 2 L-methionine + 2 oxidized [2Fe-2S]-[ferredoxin]. Its pathway is cofactor biosynthesis; biotin biosynthesis; biotin from 7,8-diaminononanoate: step 2/2. Its function is as follows. Catalyzes the conversion of dethiobiotin (DTB) to biotin by the insertion of a sulfur atom into dethiobiotin via a radical-based mechanism. This Citrifermentans bemidjiense (strain ATCC BAA-1014 / DSM 16622 / JCM 12645 / Bem) (Geobacter bemidjiensis) protein is Biotin synthase.